The chain runs to 217 residues: ATP-dependent Clp protease proteolytic subunit 2 (217 aa).

The Nucleophile role is filled by S113. H138 is an active-site residue.

This sequence belongs to the peptidase S14 family. In terms of assembly, fourteen ClpP subunits assemble into 2 heptameric rings which stack back to back to give a disk-like structure with a central cavity, resembling the structure of eukaryotic proteasomes.

The protein localises to the cytoplasm. It carries out the reaction Hydrolysis of proteins to small peptides in the presence of ATP and magnesium. alpha-casein is the usual test substrate. In the absence of ATP, only oligopeptides shorter than five residues are hydrolyzed (such as succinyl-Leu-Tyr-|-NHMec, and Leu-Tyr-Leu-|-Tyr-Trp, in which cleavage of the -Tyr-|-Leu- and -Tyr-|-Trp bonds also occurs).. In terms of biological role, cleaves peptides in various proteins in a process that requires ATP hydrolysis. Has a chymotrypsin-like activity. Plays a major role in the degradation of misfolded proteins. The sequence is that of ATP-dependent Clp protease proteolytic subunit 2 from Frankia casuarinae (strain DSM 45818 / CECT 9043 / HFP020203 / CcI3).